Here is a 38-residue protein sequence, read N- to C-terminus: Potassium channel toxin alpha-KTx 2.3 (38 aa).

Cystine bridges form between Cys-7-Cys-29, Cys-13-Cys-34, and Cys-17-Cys-36.

This sequence belongs to the short scorpion toxin superfamily. Potassium channel inhibitor family. Alpha-KTx 02 subfamily. Expressed by the venom gland.

It is found in the secreted. Its function is as follows. Inhibitor of voltage-gated potassium channels (Kv). It is capable of displacing the binding of radio-labeled noxiustoxin (AC P08815) to rat brain synaptosomes with high affinity (about 100 pM). It is also capable of inhibiting transient potassium-currents (resembling I(A)-type currents), in cultured rat cerebellar granule cells. About 50% of the peak currents are reduced by application of a 1.5 uM solution of this toxin. This chain is Potassium channel toxin alpha-KTx 2.3, found in Centruroides limpidus (Mexican scorpion).